Here is a 397-residue protein sequence, read N- to C-terminus: Sporulation-specific protein 20 (397 aa).

Residues 1–26 (MGFRKILASKSHHSRHHNQHHKNLKL) are disordered. The interval 4-50 (RKILASKSHHSRHHNQHHKNLKLQNHRYVLISNITGSHETKYLSPFR) is inhibitory region. Basic residues predominate over residues 10–26 (KSHHSRHHNQHHKNLKL). Residues 51–95 (MDNCSGSRRRDRLHVKLKSLRNKIHKQLHPNCRFDDATKTSDDKC) form a positive regulatory region region. One can recognise a t-SNARE coiled-coil homology domain in the interval 330-392 (NQMEIDLYGN…QAKRYRLEKV (63 aa)).

Belongs to the SNAP-25 family. Interacts with the t-SNARE SSO1 and the v-SNARE SNC2.

It is found in the cell membrane. It localises to the prospore membrane. Its function is as follows. Required to maintain the prospore membrane to the nucleus during sporulation in order to capture the daughter nuclei and form the spores. Mediates the fusion of exocytic vesicles with the plasma membrane during sporulation through its interactions with the t-SNARE SSO1 and v-SNARE SNC2. This is Sporulation-specific protein 20 (SPO20) from Saccharomyces cerevisiae (strain ATCC 204508 / S288c) (Baker's yeast).